The chain runs to 95 residues: UPF0473 protein GWCH70_2487 (95 aa).

The protein belongs to the UPF0473 family.

The polypeptide is UPF0473 protein GWCH70_2487 (Geobacillus sp. (strain WCH70)).